We begin with the raw amino-acid sequence, 346 residues long: Histidinol-phosphate aminotransferase (346 aa).

N6-(pyridoxal phosphate)lysine is present on K209.

It belongs to the class-II pyridoxal-phosphate-dependent aminotransferase family. Histidinol-phosphate aminotransferase subfamily. As to quaternary structure, homodimer. Requires pyridoxal 5'-phosphate as cofactor.

It catalyses the reaction L-histidinol phosphate + 2-oxoglutarate = 3-(imidazol-4-yl)-2-oxopropyl phosphate + L-glutamate. Its pathway is amino-acid biosynthesis; L-histidine biosynthesis; L-histidine from 5-phospho-alpha-D-ribose 1-diphosphate: step 7/9. This chain is Histidinol-phosphate aminotransferase, found in Flavobacterium psychrophilum (strain ATCC 49511 / DSM 21280 / CIP 103535 / JIP02/86).